We begin with the raw amino-acid sequence, 131 residues long: Histone H2A.2 (131 aa).

Ser-2 is modified (N-acetylserine). N6-acetyllysine is present on residues Lys-5 and Lys-8. An N5-methylglutamine modification is found at Gln-106. At Ser-128 the chain carries Phosphoserine. A [ST]-Q motif motif is present at residues 128 to 129 (SQ).

The protein belongs to the histone H2A family. As to quaternary structure, the nucleosome is a histone octamer containing two molecules each of H2A, H2B, H3 and H4 assembled in one H3-H4 heterotetramer and two H2A-H2B heterodimers. The octamer wraps approximately 147 bp of DNA. Post-translationally, phosphorylated to form H2AS128ph (gamma-H2A) in response to DNA double-strand breaks (DSBs) generated by exogenous genotoxic agents and by stalled replication forks. Phosphorylation is dependent on the DNA damage checkpoint kinases MEC1/ATR and TEL1/ATM, spreads on either side of a detected DSB site and may mark the surrounding chromatin for recruitment of proteins required for DNA damage signaling and repair. Gamma-H2A is removed from the DNA prior to the strand invasion-primer extension step of the repair process and subsequently dephosphorylated by PPH3, a component of the histone H2A phosphatase complex (HTP-C). Dephosphorylation is necessary for efficient recovery from the DNA damage checkpoint. Acetylated by ESA1 to form H2AK4ac and H2AK7ac.

It localises to the nucleus. Its subcellular location is the chromosome. Its function is as follows. Core component of nucleosome which plays a central role in DNA double strand break (DSB) repair. Nucleosomes wrap and compact DNA into chromatin, limiting DNA accessibility to the cellular machineries which require DNA as a template. Histones thereby play a central role in transcription regulation, DNA repair, DNA replication and chromosomal stability. DNA accessibility is regulated via a complex set of post-translational modifications of histones, also called histone code, and nucleosome remodeling. This Candida glabrata (strain ATCC 2001 / BCRC 20586 / JCM 3761 / NBRC 0622 / NRRL Y-65 / CBS 138) (Yeast) protein is Histone H2A.2 (HTA2).